Consider the following 199-residue polypeptide: MAAAGDEIETLIATMARLPGLGPRSARRIVLHLIRRRTGQMAQLAGLMANVAEHARECLVCGNVTGSDICPICEDPDRATGEICVVTDVADLWALERGRAFHGRYHVLGGSLSALDEVGPEDLRIPQLIARIAEEGITEVILALSATVEGQTTAHYIAEALAPTGVAVTGLAQGVPIGGELDYLDDGTITAALRARRKL.

The segment at 58–73 (CLVCGNVTGSDICPIC) adopts a C4-type zinc-finger fold. The Toprim domain occupies 81–176 (GEICVVTDVA…AVTGLAQGVP (96 aa)).

The protein belongs to the RecR family.

Its function is as follows. May play a role in DNA repair. It seems to be involved in an RecBC-independent recombinational process of DNA repair. It may act with RecF and RecO. This chain is Recombination protein RecR, found in Paracoccus denitrificans (strain Pd 1222).